Here is a 349-residue protein sequence, read N- to C-terminus: Merozoite surface protein P38 (349 aa).

A signal peptide spans 1-21; the sequence is MKRWSIITGIVIIFCILTCKG. 2 6-Cys domains span residues 22-149 and 153-301; these read QVEN…ISNG and KIPG…YLTN. 4 disulfide bridges follow: cysteine 77-cysteine 127, cysteine 157-cysteine 183, cysteine 197-cysteine 278, and cysteine 208-cysteine 276. Residues asparagine 294, asparagine 295, and asparagine 301 are each glycosylated (N-linked (GlcNAc...) asparagine). Asparagine 315 carries GPI-anchor amidated asparagine lipidation. A propeptide spans 316–349 (removed in mature form); it reads SEIFERIEREEISFAFSSYLSITLILLYLFFLNF.

Its subcellular location is the cell surface. The protein resides in the cell membrane. The polypeptide is Merozoite surface protein P38 (PFS38) (Plasmodium falciparum (isolate 3D7)).